Consider the following 726-residue polypeptide: Catalase-peroxidase (726 aa).

The disordered stretch occupies residues 1–33; sequence MSTSDDIHNTTATGKCPFHQGGHDQSAGAGTTT. A cross-link (tryptophyl-tyrosyl-methioninium (Trp-Tyr) (with M-252)) is located at residues 105–226; that stretch reads WHGAGTYRSI…LGATEMGLIY (122 aa). The active-site Proton acceptor is the His-106. Positions 226–252 form a cross-link, tryptophyl-tyrosyl-methioninium (Tyr-Met) (with W-105); sequence YVNPEGPDHSGEPLSAAAAIRATFGNM. His-267 lines the heme b pocket.

It belongs to the peroxidase family. Peroxidase/catalase subfamily. As to quaternary structure, homodimer or homotetramer. The cofactor is heme b. Post-translationally, formation of the three residue Trp-Tyr-Met cross-link is important for the catalase, but not the peroxidase activity of the enzyme.

The catalysed reaction is H2O2 + AH2 = A + 2 H2O. It catalyses the reaction 2 H2O2 = O2 + 2 H2O. Bifunctional enzyme with both catalase and broad-spectrum peroxidase activity. This is Catalase-peroxidase from Shigella boydii serotype 4 (strain Sb227).